Consider the following 481-residue polypeptide: Glutamate--cysteine ligase (481 aa).

The protein belongs to the glutamate--cysteine ligase type 1 family. Type 1 subfamily.

The enzyme catalyses L-cysteine + L-glutamate + ATP = gamma-L-glutamyl-L-cysteine + ADP + phosphate + H(+). It participates in sulfur metabolism; glutathione biosynthesis; glutathione from L-cysteine and L-glutamate: step 1/2. In Clostridium acetobutylicum (strain ATCC 824 / DSM 792 / JCM 1419 / IAM 19013 / LMG 5710 / NBRC 13948 / NRRL B-527 / VKM B-1787 / 2291 / W), this protein is Glutamate--cysteine ligase.